We begin with the raw amino-acid sequence, 203 residues long: Small ribosomal subunit protein uS4c (203 aa).

The segment at 19–43 (PGLTNKSPKAGSDLRKQPRSRKKSQ) is disordered. The S4 RNA-binding domain maps to 89-152 (MRLDNILFRL…KSRTLIQNSL (64 aa)).

Belongs to the universal ribosomal protein uS4 family. As to quaternary structure, part of the 30S ribosomal subunit. Contacts protein S5. The interaction surface between S4 and S5 is involved in control of translational fidelity.

The protein localises to the plastid. It localises to the chloroplast. Its function is as follows. One of the primary rRNA binding proteins, it binds directly to 16S rRNA where it nucleates assembly of the body of the 30S subunit. In terms of biological role, with S5 and S12 plays an important role in translational accuracy. The chain is Small ribosomal subunit protein uS4c (rps4) from Jasminum nudiflorum (Winter jasmine).